The following is a 121-amino-acid chain: MENQKQRLGRLAEDAAQAFLENQGFTIVERNYRTRVAEIDIVAKEAETLVFVEVKARGAFSRGGPREAVSLAKQQKIILGARFFLMERGLVDVRVRFDVVAVYEENNAFRIELIRNAFQTD.

This sequence belongs to the UPF0102 family.

The sequence is that of UPF0102 protein HRM2_30940 from Desulforapulum autotrophicum (strain ATCC 43914 / DSM 3382 / VKM B-1955 / HRM2) (Desulfobacterium autotrophicum).